We begin with the raw amino-acid sequence, 95 residues long: Small ribosomal subunit protein bS20 (95 aa).

It belongs to the bacterial ribosomal protein bS20 family.

Binds directly to 16S ribosomal RNA. This is Small ribosomal subunit protein bS20 from Ehrlichia ruminantium (strain Gardel).